Consider the following 244-residue polypeptide: tRNA (guanine-N(1)-)-methyltransferase (244 aa).

S-adenosyl-L-methionine-binding positions include Gly114 and 134–139; that span reads IGDYVL. Residues 220–244 are disordered; that stretch reads RRPDLLEKAGASPGKSGSNFGKHDA.

This sequence belongs to the RNA methyltransferase TrmD family. Homodimer.

Its subcellular location is the cytoplasm. The catalysed reaction is guanosine(37) in tRNA + S-adenosyl-L-methionine = N(1)-methylguanosine(37) in tRNA + S-adenosyl-L-homocysteine + H(+). Functionally, specifically methylates guanosine-37 in various tRNAs. This is tRNA (guanine-N(1)-)-methyltransferase from Rhizobium johnstonii (strain DSM 114642 / LMG 32736 / 3841) (Rhizobium leguminosarum bv. viciae).